Consider the following 234-residue polypeptide: 2-C-methyl-D-erythritol 4-phosphate cytidylyltransferase (234 aa).

The protein belongs to the IspD/TarI cytidylyltransferase family. IspD subfamily.

It carries out the reaction 2-C-methyl-D-erythritol 4-phosphate + CTP + H(+) = 4-CDP-2-C-methyl-D-erythritol + diphosphate. It functions in the pathway isoprenoid biosynthesis; isopentenyl diphosphate biosynthesis via DXP pathway; isopentenyl diphosphate from 1-deoxy-D-xylulose 5-phosphate: step 2/6. Catalyzes the formation of 4-diphosphocytidyl-2-C-methyl-D-erythritol from CTP and 2-C-methyl-D-erythritol 4-phosphate (MEP). The polypeptide is 2-C-methyl-D-erythritol 4-phosphate cytidylyltransferase (Syntrophus aciditrophicus (strain SB)).